Reading from the N-terminus, the 94-residue chain is MFVDDNSLIIYSTWPSTLSDSSGRVIIMPDNRSFTFKEGFKLDESIKSILLVNPSSIDLLKIRVYKHRIKWMGDIFVLFEQENIPPPFRLVNDK.

Belongs to the orthopoxvirus OPG142 family. Part of a complex composed of the kinase OPG054, OPG092, OPG100, OPG114, OPG115, OPG142 and OPG157.

It localises to the host cytoplasm. It is found in the virion. In terms of biological role, late protein which is a part of a large complex required for early virion morphogenesis. This complex participates in the formation of virosomes and the incorporation of virosomal contents into nascent immature virions. Required for the stability and kinase activity of OPG054. The sequence is that of Core protein OPG142 (OPG142) from Cynomys gunnisoni (Gunnison's prairie dog).